A 438-amino-acid polypeptide reads, in one-letter code: V-type ATP synthase beta chain (438 aa).

The protein belongs to the ATPase alpha/beta chains family.

Produces ATP from ADP in the presence of a proton gradient across the membrane. The V-type beta chain is a regulatory subunit. This Protochlamydia amoebophila (strain UWE25) protein is V-type ATP synthase beta chain.